The primary structure comprises 129 residues: NADPH-dependent 7-cyano-7-deazaguanine reductase (129 aa).

Residue Cys34 is the Thioimide intermediate of the active site. Asp41 acts as the Proton donor in catalysis. Residues 56–58 (VEL) and 75–76 (HE) each bind substrate.

This sequence belongs to the GTP cyclohydrolase I family. QueF type 1 subfamily.

It is found in the cytoplasm. The catalysed reaction is 7-aminomethyl-7-carbaguanine + 2 NADP(+) = 7-cyano-7-deazaguanine + 2 NADPH + 3 H(+). It participates in tRNA modification; tRNA-queuosine biosynthesis. Catalyzes the NADPH-dependent reduction of 7-cyano-7-deazaguanine (preQ0) to 7-aminomethyl-7-deazaguanine (preQ1). The sequence is that of NADPH-dependent 7-cyano-7-deazaguanine reductase from Alkalilimnicola ehrlichii (strain ATCC BAA-1101 / DSM 17681 / MLHE-1).